An 878-amino-acid polypeptide reads, in one-letter code: Aconitate hydratase A (878 aa).

[4Fe-4S] cluster is bound by residues Cys-426, Cys-492, and Cys-495.

The protein belongs to the aconitase/IPM isomerase family. Monomer. It depends on [4Fe-4S] cluster as a cofactor.

The catalysed reaction is citrate = D-threo-isocitrate. The enzyme catalyses (2S,3R)-3-hydroxybutane-1,2,3-tricarboxylate = 2-methyl-cis-aconitate + H2O. Its pathway is carbohydrate metabolism; tricarboxylic acid cycle; isocitrate from oxaloacetate: step 2/2. It participates in organic acid metabolism; propanoate degradation. Its function is as follows. Involved in the catabolism of short chain fatty acids (SCFA) via the tricarboxylic acid (TCA)(acetyl degradation route) and probably the 2-methylcitrate cycle I (propionate degradation route). Catalyzes the reversible isomerization of citrate to isocitrate via cis-aconitate. Could catalyze the hydration of 2-methyl-cis-aconitate to yield (2R,3S)-2-methylisocitrate. The apo form of AcnA functions as a RNA-binding regulatory protein. In Rickettsia conorii (strain ATCC VR-613 / Malish 7), this protein is Aconitate hydratase A (acnA).